The sequence spans 430 residues: UDP-glucose 6-dehydrogenase AglM (430 aa).

The active site involves C269.

Belongs to the UDP-glucose/GDP-mannose dehydrogenase family.

The catalysed reaction is UDP-alpha-D-glucose + 2 NAD(+) + H2O = UDP-alpha-D-glucuronate + 2 NADH + 3 H(+). The protein operates within nucleotide-sugar biosynthesis; UDP-alpha-D-glucuronate biosynthesis; UDP-alpha-D-glucuronate from UDP-alpha-D-glucose: step 1/1. It functions in the pathway cell surface structure biogenesis; S-layer biogenesis. With respect to regulation, activity improves as salinity decreases. Involved in the assembly of a N-linked pentasaccharide that decorates the S-layer glycoprotein and flagellins. Involved in the biosynthesis of the hexuronic acids found at both positions 2 and 3 of the pentasaccharide. The polypeptide is UDP-glucose 6-dehydrogenase AglM (aglM) (Haloferax volcanii (strain ATCC 29605 / DSM 3757 / JCM 8879 / NBRC 14742 / NCIMB 2012 / VKM B-1768 / DS2) (Halobacterium volcanii)).